The chain runs to 102 residues: NADH-quinone oxidoreductase subunit K 2 (102 aa).

The next 3 membrane-spanning stretches (helical) occupy residues 5–25 (FEHVLILAGLLFALGLVCVLV), 30–50 (LIMLLIGIEVMLNAAMLAFVG), and 65–85 (LIIMALTSAEVSLALAMVVYL).

The protein belongs to the complex I subunit 4L family. As to quaternary structure, NDH-1 is composed of 14 different subunits. Subunits NuoA, H, J, K, L, M, N constitute the membrane sector of the complex.

Its subcellular location is the cell inner membrane. The catalysed reaction is a quinone + NADH + 5 H(+)(in) = a quinol + NAD(+) + 4 H(+)(out). NDH-1 shuttles electrons from NADH, via FMN and iron-sulfur (Fe-S) centers, to quinones in the respiratory chain. The immediate electron acceptor for the enzyme in this species is believed to be ubiquinone. Couples the redox reaction to proton translocation (for every two electrons transferred, four hydrogen ions are translocated across the cytoplasmic membrane), and thus conserves the redox energy in a proton gradient. This is NADH-quinone oxidoreductase subunit K 2 from Geobacter sulfurreducens (strain ATCC 51573 / DSM 12127 / PCA).